Consider the following 145-residue polypeptide: UI (145 aa).

The first 22 residues, 1 to 22 (MKPVPLVLLITSVLLTTHIPLS), serve as a signal peptide directing secretion. Val-143 is subject to Valine amide.

This sequence belongs to the sauvagine/corticotropin-releasing factor/urotensin I family.

It localises to the secreted. Urotensin is found in the teleost caudal neurosecretory system. It has a suggested role in osmoregulation and as a corticotropin-releasing factor. The non-hormonal portion of this precursor may be a urotensin binding protein, urophysin. This chain is UI, found in Carassius auratus (Goldfish).